The chain runs to 430 residues: MDRIRIVGGNELNGIIPISGAKNAALPLMIASLLTSDTLTLENVPHLADVELLMRILGNHGVDVAVNGRRERQEDSYSRTIHFTCRTIVDTTASYELVSKMRASFWVIGPLLAREGHCRVSLPGGCAIGTRPVDLFIEGLTALGATMEIDAGYINAKAPNGGLIGARYTFPKVSVGATHVVMMAATLARGTTVIGNAAREPEVVDLANCLNAMGAKISGAGTATITIEGVTSLSGARHRVLPDRIETGTYAMAVAMAGGDVVLENTDVALLDTALETLRRAGADISATNNGMRVKRNGAGIKPVDIVTDPFPGFPTDLQAQFMALMTRSSGISHVTETIFENRFMHVQELARLGARITLSGQTAKIEGVQRLRGAPVMATDLRASVSLVIAGLAAEGETTVSRVYHLDRGFERLEEKLTRCGAVVERISE.

22-23 (KN) serves as a coordination point for phosphoenolpyruvate. Arg-102 lines the UDP-N-acetyl-alpha-D-glucosamine pocket. Cys-126 serves as the catalytic Proton donor. The residue at position 126 (Cys-126) is a 2-(S-cysteinyl)pyruvic acid O-phosphothioketal. Residues 131-135 (RPVDL), 172-175 (KVSV), Asp-317, and Ile-339 contribute to the UDP-N-acetyl-alpha-D-glucosamine site.

The protein belongs to the EPSP synthase family. MurA subfamily.

It is found in the cytoplasm. The catalysed reaction is phosphoenolpyruvate + UDP-N-acetyl-alpha-D-glucosamine = UDP-N-acetyl-3-O-(1-carboxyvinyl)-alpha-D-glucosamine + phosphate. Its pathway is cell wall biogenesis; peptidoglycan biosynthesis. In terms of biological role, cell wall formation. Adds enolpyruvyl to UDP-N-acetylglucosamine. This is UDP-N-acetylglucosamine 1-carboxyvinyltransferase from Rhizobium leguminosarum bv. trifolii (strain WSM2304).